A 399-amino-acid chain; its full sequence is S-adenosylmethionine synthase (399 aa).

His15 contributes to the ATP binding site. A Mg(2+)-binding site is contributed by Asp17. Glu43 lines the K(+) pocket. Residues Glu56 and Gln99 each coordinate L-methionine. Residues 99–109 (QSADIAQGVDN) form a flexible loop region. Residues 174-176 (DGK), 244-245 (RF), Asp253, 259-260 (RK), Ala276, and Lys280 each bind ATP. Asp253 contacts L-methionine. Position 284 (Lys284) interacts with L-methionine.

It belongs to the AdoMet synthase family. In terms of assembly, homotetramer; dimer of dimers. Requires Mg(2+) as cofactor. K(+) is required as a cofactor.

It is found in the cytoplasm. It carries out the reaction L-methionine + ATP + H2O = S-adenosyl-L-methionine + phosphate + diphosphate. Its pathway is amino-acid biosynthesis; S-adenosyl-L-methionine biosynthesis; S-adenosyl-L-methionine from L-methionine: step 1/1. Catalyzes the formation of S-adenosylmethionine (AdoMet) from methionine and ATP. The overall synthetic reaction is composed of two sequential steps, AdoMet formation and the subsequent tripolyphosphate hydrolysis which occurs prior to release of AdoMet from the enzyme. The protein is S-adenosylmethionine synthase of Salinispora tropica (strain ATCC BAA-916 / DSM 44818 / JCM 13857 / NBRC 105044 / CNB-440).